Consider the following 72-residue polypeptide: Small ribosomal subunit protein bS18c (72 aa).

This sequence belongs to the bacterial ribosomal protein bS18 family. As to quaternary structure, part of the 30S ribosomal subunit.

It is found in the plastid. The protein localises to the chloroplast. The chain is Small ribosomal subunit protein bS18c from Emiliania huxleyi (Coccolithophore).